The chain runs to 51 residues: Magnetosome protein Mms5 (51 aa).

Over 1 to 8 the chain is Lumenal; it reads MLSAKGVS. The segment at 9-16 is LG region; sequence LGLGLGLG. A helical transmembrane segment spans residues 9 to 29; the sequence is LGLGLGLGAWGPVLLGVVGVA. Over 30-51 the chain is Cytoplasmic; sequence GALALYGYYKNRNAEPAAAEAV.

This sequence belongs to the magnetosome MamD/Mms5 family. May undergo N-terminal cleavage.

It localises to the magnetosome membrane. In terms of biological role, might be involved in magnetite crystal growth. The protein is Magnetosome protein Mms5 of Magnetospirillum gryphiswaldense (strain DSM 6361 / JCM 21280 / NBRC 15271 / MSR-1).